Consider the following 229-residue polypeptide: Non-structural protein P8 (229 aa).

The next 2 membrane-spanning stretches (helical) occupy residues 119–139 (IIHM…VCTL) and 162–182 (SLNP…MVCA).

Belongs to the orbivirus NS3 family. In terms of assembly, forms homooligomers via coiled-coil motif. Interacts with host OPTN; this interaction inhibits innate immune response.

The protein localises to the host cell membrane. It is found in the host Golgi apparatus. Functionally, plays a role in the inhibition of host innate immune response. Interacts with host OPTN and thus inhibits the recruitment of TBK1 to the host Golgi apparatus. In turn, downstream partner IRF3 cannot be activated and IFN-beta production is impaired. Its function is as follows. Facilitates viral particle release either by increasing plasma membrane permeability through a viroporin-like activity or by viral budding. This Antilocapra americana (Pronghorn) protein is Non-structural protein P8 (Segment-10).